Reading from the N-terminus, the 148-residue chain is Male-specific protein scotti (148 aa).

The segment at 56 to 78 is disordered; the sequence is PQEPPLGVFPAQGGPNGPPRLRK. N129 carries N-linked (GlcNAc...) asparagine glycosylation.

The protein belongs to the male-specific scotti family.

In terms of biological role, post-meiotically transcribed gene that has a role in late spermiogenesis; required for actin cone progression during spermatid individualization. In Drosophila sechellia (Fruit fly), this protein is Male-specific protein scotti.